The primary structure comprises 94 residues: uncharacterized protein (94 aa).

Expressed in heart.

This is an uncharacterized protein from Homo sapiens (Human).